Consider the following 308-residue polypeptide: tRNA dimethylallyltransferase (308 aa).

17–24 provides a ligand contact to ATP; sequence GPTGSGKS. 19–24 provides a ligand contact to substrate; sequence TGSGKS.

This sequence belongs to the IPP transferase family. As to quaternary structure, monomer. The cofactor is Mg(2+).

It catalyses the reaction adenosine(37) in tRNA + dimethylallyl diphosphate = N(6)-dimethylallyladenosine(37) in tRNA + diphosphate. Catalyzes the transfer of a dimethylallyl group onto the adenine at position 37 in tRNAs that read codons beginning with uridine, leading to the formation of N6-(dimethylallyl)adenosine (i(6)A). The polypeptide is tRNA dimethylallyltransferase (Paenarthrobacter aurescens (strain TC1)).